A 475-amino-acid polypeptide reads, in one-letter code: MAKLHITTWGCQMNEYDSSKMADLLNSTHGLELTDKPEEADVLLLNTCSIREKAQEKVFSQLGRWKNWKKDKPDLIIGVGGCVASQEGEHIRDRAPFVDIVFGPQTLHRLPEMINKIRGGDRAIVDISFPEIEKFDRLPEPRAEGPTAFVSIMEGCNKYCSFCVVPYTRGEEVSRPVDDVLFEIAQLAEQGVREVNLLGQNVNAYRGETFDGGICTFAELLRLVAAIDGIDRVRYTTSHPIEFTDDIIEVYRDTPELVSFLHLPIQSGADRVLTMMKRNHTALEYKAIIRKLREVRPNIQISSDFIVGFPGETAEDFEQTMKVIEQVNFDMSFSFIYSARPGTPAADLPDDISEEEKKERLARLQQRINHQAMQFSRAMLGTEQRVLVEGPSKKDIMELTGRTENNRIVNFQGTPDMIGKFVDIKITDVYTNSLRGDVVRTEDEMGLRVVESAASVIARTRKEDDLGVGKYVVNL.

Residues 2–119 (AKLHITTWGC…LPEMINKIRG (118 aa)) enclose the MTTase N-terminal domain. 6 residues coordinate [4Fe-4S] cluster: Cys11, Cys48, Cys82, Cys156, Cys160, and Cys163. Residues 142 to 374 (RAEGPTAFVS…QQRINHQAMQ (233 aa)) form the Radical SAM core domain. The TRAM domain occupies 377-440 (RAMLGTEQRV…TNSLRGDVVR (64 aa)).

Belongs to the methylthiotransferase family. MiaB subfamily. Monomer. Requires [4Fe-4S] cluster as cofactor.

It is found in the cytoplasm. It catalyses the reaction N(6)-dimethylallyladenosine(37) in tRNA + (sulfur carrier)-SH + AH2 + 2 S-adenosyl-L-methionine = 2-methylsulfanyl-N(6)-dimethylallyladenosine(37) in tRNA + (sulfur carrier)-H + 5'-deoxyadenosine + L-methionine + A + S-adenosyl-L-homocysteine + 2 H(+). Functionally, catalyzes the methylthiolation of N6-(dimethylallyl)adenosine (i(6)A), leading to the formation of 2-methylthio-N6-(dimethylallyl)adenosine (ms(2)i(6)A) at position 37 in tRNAs that read codons beginning with uridine. This Actinobacillus pleuropneumoniae serotype 5b (strain L20) protein is tRNA-2-methylthio-N(6)-dimethylallyladenosine synthase.